We begin with the raw amino-acid sequence, 264 residues long: Indole-3-glycerol phosphate synthase (264 aa).

This sequence belongs to the TrpC family.

The catalysed reaction is 1-(2-carboxyphenylamino)-1-deoxy-D-ribulose 5-phosphate + H(+) = (1S,2R)-1-C-(indol-3-yl)glycerol 3-phosphate + CO2 + H2O. It participates in amino-acid biosynthesis; L-tryptophan biosynthesis; L-tryptophan from chorismate: step 4/5. The protein is Indole-3-glycerol phosphate synthase of Lactococcus lactis subsp. cremoris (strain MG1363).